Here is a 1451-residue protein sequence, read N- to C-terminus: DNA excision repair protein ERCC-6-like (1451 aa).

The stretch at 27 to 60 (YDRYRQKGKEAALNGELPRALELFQLAYQLQPSE) is one TPR 1 repeat. The Helicase ATP-binding domain occupies 118-286 (SLYRDGRKGG…WALFDFACQG (169 aa)). Residue 131 to 138 (DDMGLGKT) participates in ATP binding. Residues 237 to 240 (DEAH) carry the DEAH box motif. The Helicase C-terminal domain occupies 479–639 (FVVSLMECLR…PFRYFSKQEL (161 aa)). Disordered stretches follow at residues 647–669 (DTRSSSTQQQLQAMHAQSRRSDT), 778–804 (NSFDEPEFEEDEQNLPSAEDAEMETAS), 935–1006 (DDTS…ATTD), 1035–1054 (DEEVHEVEESAAEESPEFQL), 1063–1083 (LEEPSINHDKQNNGEFVNYND), 1096–1140 (RSTP…LTSS), and 1182–1343 (LLEN…SAEL). The segment covering 781–804 (DEPEFEEDEQNLPSAEDAEMETAS) has biased composition (acidic residues). Polar residues-rich tracts occupy residues 944–964 (SDFNTESKQQNSSQRFQSPSL) and 992–1002 (QVLSSPLSQHE). At Ser-961 the chain carries Phosphoserine. Residues 1035–1050 (DEEVHEVEESAAEESP) are compositionally biased toward acidic residues. A compositionally biased stretch (basic and acidic residues) spans 1063 to 1074 (LEEPSINHDKQN). Residues 1121–1132 (DTEEEEEEEEES) are compositionally biased toward acidic residues. A compositionally biased stretch (polar residues) spans 1213-1230 (VQTSSGDNSKSYETSEAN). The span at 1244 to 1278 (YREGKNTSDKVSESNETHSEEFAEEEKPSGDKSES) shows a compositional bias: basic and acidic residues. The span at 1310 to 1341 (SEADESVVEEEEPSGETLNTEESEMGEEEESA) shows a compositional bias: acidic residues. A TPR 2 repeat occupies 1402–1435 (YNLLVLSGKQSLAEGRKQEALDFFLKAIDINTGD).

It belongs to the SNF2/RAD54 helicase family.

It localises to the chromosome. It is found in the centromere. The protein localises to the kinetochore. The catalysed reaction is ATP + H2O = ADP + phosphate + H(+). In terms of biological role, DNA helicase that acts as a tension sensor that associates with catenated DNA which is stretched under tension until it is resolved during anaphase. Functions as ATP-dependent DNA translocase. Can promote Holliday junction branch migration (in vitro). The sequence is that of DNA excision repair protein ERCC-6-like (ercc6l) from Danio rerio (Zebrafish).